A 341-amino-acid chain; its full sequence is Methionine import ATP-binding protein MetN (341 aa).

Residues 9-247 (ISVEQLNKEI…PQSAITEELF (239 aa)) form the ABC transporter domain. ATP is bound at residue 41-48 (GHSGSGKS).

It belongs to the ABC transporter superfamily. Methionine importer (TC 3.A.1.24) family. In terms of assembly, the complex is composed of two ATP-binding proteins (MetN), two transmembrane proteins (MetI) and a solute-binding protein (MetQ).

It localises to the cell inner membrane. It catalyses the reaction L-methionine(out) + ATP + H2O = L-methionine(in) + ADP + phosphate + H(+). It carries out the reaction D-methionine(out) + ATP + H2O = D-methionine(in) + ADP + phosphate + H(+). Its function is as follows. Part of the ABC transporter complex MetNIQ involved in methionine import. Responsible for energy coupling to the transport system. This Chlamydia abortus (strain DSM 27085 / S26/3) (Chlamydophila abortus) protein is Methionine import ATP-binding protein MetN.